A 485-amino-acid chain; its full sequence is Cysteine protease atg4da (485 aa).

The segment at 22 to 46 is disordered; the sequence is ASASSKRHLGHGAVPDGIREGSGEP. Residue Cys-131 is the Nucleophile of the active site. Catalysis depends on residues Asp-368 and His-370.

It belongs to the peptidase C54 family.

The protein localises to the cytoplasm. It carries out the reaction [protein]-C-terminal L-amino acid-glycyl-phosphatidylethanolamide + H2O = [protein]-C-terminal L-amino acid-glycine + a 1,2-diacyl-sn-glycero-3-phosphoethanolamine. It catalyses the reaction [protein]-C-terminal L-amino acid-glycyl-phosphatidylserine + H2O = [protein]-C-terminal L-amino acid-glycine + a 1,2-diacyl-sn-glycero-3-phospho-L-serine. Cysteine protease that plays a key role in autophagy by mediating both proteolytic activation and delipidation of ATG8 family proteins. The protease activity is required for proteolytic activation of ATG8 family proteins to reveal a C-terminal glycine. Exposure of the glycine at the C-terminus is essential for ATG8 proteins conjugation to phosphatidylethanolamine (PE) and insertion to membranes, which is necessary for autophagy. In addition to the protease activity, also mediates delipidation of ATG8 family proteins. Catalyzes delipidation of PE-conjugated forms of ATG8 proteins during macroautophagy. Also involved in non-canonical autophagy, a parallel pathway involving conjugation of ATG8 proteins to single membranes at endolysosomal compartments, by catalyzing delipidation of ATG8 proteins conjugated to phosphatidylserine (PS). ATG4D plays a role in the autophagy-mediated neuronal homeostasis in the central nervous system. This Danio rerio (Zebrafish) protein is Cysteine protease atg4da.